We begin with the raw amino-acid sequence, 396 residues long: Deoxyguanosinetriphosphate triphosphohydrolase-like protein (396 aa).

Positions Arg69–Asn211 constitute an HD domain.

Belongs to the dGTPase family. Type 2 subfamily.

The sequence is that of Deoxyguanosinetriphosphate triphosphohydrolase-like protein from Parvibaculum lavamentivorans (strain DS-1 / DSM 13023 / NCIMB 13966).